We begin with the raw amino-acid sequence, 360 residues long: Phospho-N-acetylmuramoyl-pentapeptide-transferase (360 aa).

The next 10 helical transmembrane spans lie at 24-44 (RAVM…PWTI), 69-89 (GTPT…TLLW), 92-112 (WANP…ALGF), 133-153 (MVWQ…LAAN), 158-178 (ILIV…GFLV), 199-219 (GLAA…AYVS), 239-259 (VAIF…FNAY), 263-283 (VFMG…VAVI), 288-308 (FVLV…MLQV), and 337-357 (QVVV…LSTL).

Belongs to the glycosyltransferase 4 family. MraY subfamily. It depends on Mg(2+) as a cofactor.

It is found in the cell inner membrane. The enzyme catalyses UDP-N-acetyl-alpha-D-muramoyl-L-alanyl-gamma-D-glutamyl-meso-2,6-diaminopimeloyl-D-alanyl-D-alanine + di-trans,octa-cis-undecaprenyl phosphate = di-trans,octa-cis-undecaprenyl diphospho-N-acetyl-alpha-D-muramoyl-L-alanyl-D-glutamyl-meso-2,6-diaminopimeloyl-D-alanyl-D-alanine + UMP. It participates in cell wall biogenesis; peptidoglycan biosynthesis. In terms of biological role, catalyzes the initial step of the lipid cycle reactions in the biosynthesis of the cell wall peptidoglycan: transfers peptidoglycan precursor phospho-MurNAc-pentapeptide from UDP-MurNAc-pentapeptide onto the lipid carrier undecaprenyl phosphate, yielding undecaprenyl-pyrophosphoryl-MurNAc-pentapeptide, known as lipid I. This is Phospho-N-acetylmuramoyl-pentapeptide-transferase from Neisseria gonorrhoeae (strain ATCC 700825 / FA 1090).